The sequence spans 297 residues: Vacuolar protein sorting-associated protein 26 (297 aa).

Belongs to the VPS26 family. In terms of assembly, component of the retromer complex, composed of VPS26, VPS29 and VPS35. As part of the retromer complex, interacts with the sorting receptor SORTLR/sortilin. Interacts with GTPase RAB7.

Plays a role in vesicular protein sorting. Component of the membrane-associated retromer complex which is essential in endosome-to-Golgi retrograde transport. In Plasmodium falciparum (isolate 3D7), this protein is Vacuolar protein sorting-associated protein 26.